The primary structure comprises 420 residues: MTMHEKMKLPSCSCSAFKCGKKDRWLNMERPIPFLLIGLTTILSVFILYTLNPLKFVIEHNIDQKLLLIKPHKEEDKCDLFNGNWVPDFEGSIYTNSSCATIPTSKNCFRNGRKDQDFLNWRWKPERCDLPRFDATAYLDIVRGKTLAFIGDSVARNHIESLLCLLSQKEVPVDAYLDSEDRNRIWHFPVHNFTLKMLWTKFLVHGEERVINGSSSGIFDLYLDKVDENWARDLHSLDYVVISDAHWFFRQVYLHRGSNVVACVYCNEANVTDRGVAFALRMAFRAAFSQINHCNKCKGIVTLLRTFSPSHFENGFWNTGGSCNRTSPYNDQKINFGAYEWEIRSMQVEEIERAEKRGKKGKSFGVLDVTMAMLMRPDGHPGAFWGNQWMKGYNDCVHWCLPGPIDVWNDLLLAVLRRLD.

Topologically, residues 1–30 (MTMHEKMKLPSCSCSAFKCGKKDRWLNMER) are cytoplasmic. The helical; Signal-anchor for type II membrane protein transmembrane segment at 31-51 (PIPFLLIGLTTILSVFILYTL) threads the bilayer. Over 52-420 (NPLKFVIEHN…LLLAVLRRLD (369 aa)) the chain is Lumenal. 4 disulfide bridges follow: C78/C128, C99/C164, C108/C400, and C323/C396. N-linked (GlcNAc...) asparagine glycosylation is present at N96. Positions 151–153 (GDS) match the GDS motif motif. S153 acts as the Nucleophile in catalysis. N-linked (GlcNAc...) asparagine glycans are attached at residues N192, N212, N270, and N324. The active-site Proton donor is D395. Positions 395 to 398 (DCVH) match the DXXH motif motif. Catalysis depends on H398, which acts as the Proton acceptor.

Belongs to the PC-esterase family. TBL subfamily.

The protein localises to the golgi apparatus membrane. Its function is as follows. Xyloglucan acetyltransferase that catalyzes the acetylation of fucosylated Gal residues on xyloglucan side chains. Predominantly catalyze 6-O-monoacetylation of Gal residues in the Fuc-Gal-Xyl trisaccharide side chains of xyloglucan oligomers. The polypeptide is Xyloglucan O-acetyltransferase 4 (Populus trichocarpa (Western balsam poplar)).